Consider the following 479-residue polypeptide: Proline--tRNA ligase (479 aa).

The protein belongs to the class-II aminoacyl-tRNA synthetase family. ProS type 3 subfamily. As to quaternary structure, homodimer.

Its subcellular location is the cytoplasm. It catalyses the reaction tRNA(Pro) + L-proline + ATP = L-prolyl-tRNA(Pro) + AMP + diphosphate. Functionally, catalyzes the attachment of proline to tRNA(Pro) in a two-step reaction: proline is first activated by ATP to form Pro-AMP and then transferred to the acceptor end of tRNA(Pro). The sequence is that of Proline--tRNA ligase from Agathobacter rectalis (strain ATCC 33656 / DSM 3377 / JCM 17463 / KCTC 5835 / VPI 0990) (Eubacterium rectale).